The chain runs to 356 residues: Altered inheritance of mitochondria protein 23, mitochondrial (356 aa).

A mitochondrion-targeting transit peptide spans 1 to 32; the sequence is MLKVPLSDVLSQKMLFLKSFRYFHCTKYFSRD.

Belongs to the AIM23 family.

It localises to the mitochondrion. The protein is Altered inheritance of mitochondria protein 23, mitochondrial (AIM23) of Saccharomyces cerevisiae (strain ATCC 204508 / S288c) (Baker's yeast).